The sequence spans 283 residues: Orotidine 5'-phosphate decarboxylase (283 aa).

K97 (proton donor) is an active-site residue.

Belongs to the OMP decarboxylase family. Type 2 subfamily.

It carries out the reaction orotidine 5'-phosphate + H(+) = UMP + CO2. It functions in the pathway pyrimidine metabolism; UMP biosynthesis via de novo pathway; UMP from orotate: step 2/2. This is Orotidine 5'-phosphate decarboxylase from Clostridium botulinum (strain Kyoto / Type A2).